The primary structure comprises 209 residues: Protein ASG7 (209 aa).

Over 1–49 (MTTLASSIEHKTKHLAAPFENDENPWMKKYCCQCKSCKMSVPVQPWLPR) the chain is Lumenal. The chain crosses the membrane as a helical span at residues 50 to 70 (FFVFGILCPVFWLVNLLAWWF). Topologically, residues 71–184 (LQYWQPHELE…LLRKTFRDWN (114 aa)) are cytoplasmic. Ser121, Ser123, and Ser125 each carry phosphoserine. Thr153 bears the Phosphothreonine mark. Residues 185 to 205 (LRSLLGLLIDSILIIFVVLLC) form a helical membrane-spanning segment. Topologically, residues 206–209 (KKSR) are lumenal.

It localises to the endomembrane system. In terms of biological role, required for receptor inhibition of inappropriately expressed a-factor receptor (STE3) in MAT a cells. Inhibits signaling by relocalizing the G protein beta-gamma (STE4-STE18) subunit to intracellular membranes. May also be a mechanism for the down-regulation of the mating pheromone response after the zygotic fusion event, promoting the transition of the new diploid cell to vegetative growth. This Saccharomyces cerevisiae (strain ATCC 204508 / S288c) (Baker's yeast) protein is Protein ASG7 (ASG7).